We begin with the raw amino-acid sequence, 199 residues long: MQDKLVWIDCEMTGLRLGTDKLIEIAALVTDSELNVLGEGVDIVIHADDDALAAMPDVVTKMHENSGLTDEVRKSTVTLAEAEQQVLAYIREHVPVAGTAPLAGNSIATDRGFIARDMPDLDTYLHYRMIDVSSIKELSRRWYPRIYFGQPEKGLAHRALADIRESIRELKYYRKTAFVPEPGPSTSDIAAVVEELGPA.

Residues 5 to 170 (LVWIDCEMTG…ADIRESIREL (166 aa)) form the Exonuclease domain. The active site involves Tyr-127.

Belongs to the oligoribonuclease family.

It localises to the cytoplasm. 3'-to-5' exoribonuclease specific for small oligoribonucleotides. The polypeptide is Oligoribonuclease (Rhodococcus jostii (strain RHA1)).